The chain runs to 243 residues: Small ribosomal subunit protein eS4 (243 aa).

Residues 37 to 99 (IPLALLLKHY…SDLYFRIVPD (63 aa)) form the S4 RNA-binding domain.

It belongs to the eukaryotic ribosomal protein eS4 family.

This chain is Small ribosomal subunit protein eS4 (rps4e), found in Sulfurisphaera tokodaii (strain DSM 16993 / JCM 10545 / NBRC 100140 / 7) (Sulfolobus tokodaii).